Consider the following 77-residue polypeptide: DNA-directed RNA polymerase subunit epsilon (77 aa).

Belongs to the RNA polymerase subunit epsilon family. RNAP is composed of a core of 2 alpha, a beta and a beta' subunit. The core is associated with a delta subunit, and at least one of epsilon or omega. When a sigma factor is associated with the core the holoenzyme is formed, which can initiate transcription.

It carries out the reaction RNA(n) + a ribonucleoside 5'-triphosphate = RNA(n+1) + diphosphate. Functionally, a non-essential component of RNA polymerase (RNAP). The protein is DNA-directed RNA polymerase subunit epsilon of Streptococcus pneumoniae (strain Hungary19A-6).